Here is a 258-residue protein sequence, read N- to C-terminus: MFPVRHALLCKALGCYDCCIRCLGAVPYPSLVSTLLCFTGMALFCGCGHEALAHTEVLVETYFVRNIQDYVILASFIKYFQYVIYGLASFFFLYCILLLAEGFYTTSAVKQTFGEFRSTRCGRCLSLTFIIVTYVLAVIWLAVFAFTAIPSSSSLIWHRPATTSTSWTETTPSINQHGWICMDARQYGLLPWNAMPGKACGMTLASICKTKEFFVTYDLYIAAFAGAGIALLALFLYVVATTYNYAVLRFLGRKGLRC.

Topologically, residues 1 to 22 (MFPVRHALLCKALGCYDCCIRC) are cytoplasmic. Residues C18, C19, and C22 are each lipidated (S-palmitoyl cysteine). Residues 23–48 (LGAVPYPSLVSTLLCFTGMALFCGCG) traverse the membrane as a helical segment. At 49–82 (HEALAHTEVLVETYFVRNIQDYVILASFIKYFQY) the chain is on the extracellular side. The chain crosses the membrane as a helical span at residues 83–103 (VIYGLASFFFLYCILLLAEGF). The Cytoplasmic segment spans residues 104 to 128 (YTTSAVKQTFGEFRSTRCGRCLSLT). S-palmitoyl cysteine attachment occurs at residues C121 and C124. The chain crosses the membrane as a helical span at residues 129-149 (FIIVTYVLAVIWLAVFAFTAI). At 150–218 (PSSSSLIWHR…KTKEFFVTYD (69 aa)) the chain is on the extracellular side. A disulfide bond links C181 and C200. The chain crosses the membrane as a helical span at residues 219–239 (LYIAAFAGAGIALLALFLYVV). Over 240-258 (ATTYNYAVLRFLGRKGLRC) the chain is Cytoplasmic.

This sequence belongs to the myelin proteolipid protein family. As to expression, central nervous system. Highest levels in spinal cord and medulla oblongata.

Its subcellular location is the cell membrane. Its function is as follows. This is the major myelin protein from the central nervous system. It plays an important role in the formation or maintenance of the multilamellar structure of myelin. May be involved in neuron and glial cell differentiation. This is Myelin proteolipid protein (plp) from Oncorhynchus mykiss (Rainbow trout).